The chain runs to 447 residues: MGKLFGTDGVRGLANKKLTAPLAMKLGAAAARVLVSKEEVGGRRPTAVVGRDPRVSGEMLTAALSAGMASQGVDVLDVGVIPTPAVAFLTDDFGADMGVMISASHNPMPDNGIKFFAAGGRKLQDDVEDEIEATMLELPETGPTGAAIGRILDESSDALERYLAHVGTAINHPLDGIRVVVDCANGAASTAAPEAYRQAGADVVAIHSRPNSFNINDGVGSTHIEVLQKAVLEHQADLGLAHDGDADRCLAVDSEGNVVDGDQIMAILAVAMKENGELKQNTLVATVMSNLGMKLAMRANGIKVLETQVGDRYVLAELLASDLSLGGEQSGHVIISEHATTGDGTLTGLTLMARMAQTGKPLSELASVMTVLPQTLINVPVADKSVIADDERVVEAIAKAEEDLGDAGRVLLRPSGTEELFRVMVEAADPGTARRIAGKLAAVVAEV.

The active-site Phosphoserine intermediate is the Ser104. Mg(2+)-binding residues include Ser104, Asp243, Asp245, and Asp247. Ser104 bears the Phosphoserine mark.

This sequence belongs to the phosphohexose mutase family. Mg(2+) serves as cofactor. Activated by phosphorylation.

It carries out the reaction alpha-D-glucosamine 1-phosphate = D-glucosamine 6-phosphate. In terms of biological role, catalyzes the conversion of glucosamine-6-phosphate to glucosamine-1-phosphate. This chain is Phosphoglucosamine mutase, found in Corynebacterium jeikeium (strain K411).